We begin with the raw amino-acid sequence, 121 residues long: Large ribosomal subunit protein uL22 (121 aa).

Belongs to the universal ribosomal protein uL22 family. As to quaternary structure, part of the 50S ribosomal subunit.

Functionally, this protein binds specifically to 23S rRNA; its binding is stimulated by other ribosomal proteins, e.g. L4, L17, and L20. It is important during the early stages of 50S assembly. It makes multiple contacts with different domains of the 23S rRNA in the assembled 50S subunit and ribosome. The globular domain of the protein is located near the polypeptide exit tunnel on the outside of the subunit, while an extended beta-hairpin is found that lines the wall of the exit tunnel in the center of the 70S ribosome. The protein is Large ribosomal subunit protein uL22 of Kocuria rhizophila (strain ATCC 9341 / DSM 348 / NBRC 103217 / DC2201).